We begin with the raw amino-acid sequence, 481 residues long: 3-isopropylmalate dehydratase large subunit (481 aa).

[4Fe-4S] cluster is bound by residues Cys357, Cys417, and Cys420.

This sequence belongs to the aconitase/IPM isomerase family. LeuC type 1 subfamily. As to quaternary structure, heterodimer of LeuC and LeuD. It depends on [4Fe-4S] cluster as a cofactor.

The catalysed reaction is (2R,3S)-3-isopropylmalate = (2S)-2-isopropylmalate. Its pathway is amino-acid biosynthesis; L-leucine biosynthesis; L-leucine from 3-methyl-2-oxobutanoate: step 2/4. Catalyzes the isomerization between 2-isopropylmalate and 3-isopropylmalate, via the formation of 2-isopropylmaleate. This Mycolicibacterium vanbaalenii (strain DSM 7251 / JCM 13017 / BCRC 16820 / KCTC 9966 / NRRL B-24157 / PYR-1) (Mycobacterium vanbaalenii) protein is 3-isopropylmalate dehydratase large subunit.